The following is a 113-amino-acid chain: MSKMQNLLAIANEVKEKHANFSISEVNDHCVRLAVFTGEYDWHHHPDSDELFIVLEGELLIDFKDKETAVLKANDSLLIPKGTVHRTRSYVRTVNLCVEHKQAETVIIEEQPC.

The 48-residue stretch at 41-88 (DWHHHPDSDELFIVLEGELLIDFKDKETAVLKANDSLLIPKGTVHRTR) folds into the Cupin type-2 domain.

Belongs to the SchB/CurC family.

This is an uncharacterized protein from Bacillus subtilis (strain 168).